The chain runs to 298 residues: Ketohexokinase (298 aa).

4 residues coordinate beta-D-fructose: Asp-15, Gly-41, Asn-42, and Asn-45. ATP-binding positions include Arg-108, 226-229 (AEEG), and 255-258 (GAGD). Asp-258 contacts beta-D-fructose.

It belongs to the carbohydrate kinase PfkB family. In terms of assembly, homodimer.

The catalysed reaction is beta-D-fructose + ATP = beta-D-fructose 1-phosphate + ADP + H(+). The protein operates within carbohydrate metabolism; fructose metabolism. Its activity is regulated as follows. Requires potassium. Inhibition by ADP. In terms of biological role, catalyzes the phosphorylation of the ketose sugar fructose to fructose-1-phosphate. This chain is Ketohexokinase, found in Mus musculus (Mouse).